We begin with the raw amino-acid sequence, 243 residues long: CD48 antigen (243 aa).

The signal sequence occupies residues 1 to 26 (MCSRGWDSCLALELLLLPLSLLVTSI). Ig-like C2-type domains lie at 29 to 127 (HLVH…KLQV) and 132 to 212 (PKPV…VCLS). Residues Asn40, Asn44, Asn104, Asn162, and Asn189 are each glycosylated (N-linked (GlcNAc...) asparagine). A disulfide bond links Cys154 and Cys196. Ser220 carries the GPI-anchor amidated serine lipid modification. The propeptide at 221-243 (FGVEWIASWLVVTVPTILGLLLT) is removed in mature form.

Interacts with CD2. Interacts with CD244; this interaction is possible not only on different cells (trans interaction) but also on the same cell (cis interaction). Interacts with LCK. As to expression, widely expressed on all hematopoietic cells.

The protein resides in the cell membrane. It localises to the membrane raft. Its subcellular location is the secreted. Functionally, glycosylphosphatidylinositol (GPI)-anchored cell surface glycoprotein that interacts via its N-terminal immunoglobulin domain with cell surface receptors including CD244/2B4 or CD2 to regulate immune cell function and activation. Participates in T-cell signaling transduction by associating with CD2 and efficiently bringing the Src family protein kinase LCK and LAT to the TCR/CD3 complex. In turn, promotes LCK phosphorylation and subsequent activation. Induces the phosphorylation of the cytoplasmic immunoreceptortyrosine switch motifs (ITSMs) of CD244 initiating a series of signaling events that leads to the generation of the immunological synapse and the directed release of cytolytic granules containing perforin and granzymes by T-lymphocytes and NK-cells. The chain is CD48 antigen (CD48) from Homo sapiens (Human).